Here is a 267-residue protein sequence, read N- to C-terminus: MRRIAVMGAAGRMGKALIEAARQAPGAGLTAAIGRPDSTLVGVDAGELAGQGRIGVSLSGELATVLDRFDVLIDFTHPTVTLKNLDICRRAGKAMVIGTTGFSADERRMLDEAAREIPIVFAANFSVGVNLCLKLLDTAARVLGDEVDIEIVEAHHRHKVDAPSGTALRMGEVVASALGRDLQKVAVYGREGQTGARTRETIGFATVRAGDIVGDHTVLFAAEGERVEITHKASSRMTFAKGAVRAALWLEGRDPALYDMQDVLGLR.

An NAD(+)-binding site is contributed by 8–13 (GAAGRM). An NADP(+)-binding site is contributed by arginine 35. Residues 98-100 (GTT) and 122-125 (AANF) contribute to the NAD(+) site. Histidine 155 serves as the catalytic Proton donor/acceptor. A (S)-2,3,4,5-tetrahydrodipicolinate-binding site is contributed by histidine 156. The active-site Proton donor is the lysine 159. 165 to 166 (GT) is a binding site for (S)-2,3,4,5-tetrahydrodipicolinate.

The protein belongs to the DapB family.

The protein resides in the cytoplasm. It catalyses the reaction (S)-2,3,4,5-tetrahydrodipicolinate + NAD(+) + H2O = (2S,4S)-4-hydroxy-2,3,4,5-tetrahydrodipicolinate + NADH + H(+). It carries out the reaction (S)-2,3,4,5-tetrahydrodipicolinate + NADP(+) + H2O = (2S,4S)-4-hydroxy-2,3,4,5-tetrahydrodipicolinate + NADPH + H(+). The protein operates within amino-acid biosynthesis; L-lysine biosynthesis via DAP pathway; (S)-tetrahydrodipicolinate from L-aspartate: step 4/4. In terms of biological role, catalyzes the conversion of 4-hydroxy-tetrahydrodipicolinate (HTPA) to tetrahydrodipicolinate. The sequence is that of 4-hydroxy-tetrahydrodipicolinate reductase from Azotobacter vinelandii (strain DJ / ATCC BAA-1303).